Here is a 186-residue protein sequence, read N- to C-terminus: dCTP deaminase (186 aa).

106–111 (KSTYAR) is a binding site for dCTP. The Proton donor/acceptor role is filled by Glu132. Gln151, Tyr166, and Gln176 together coordinate dCTP.

Belongs to the dCTP deaminase family. Homotrimer.

The enzyme catalyses dCTP + H2O + H(+) = dUTP + NH4(+). It participates in pyrimidine metabolism; dUMP biosynthesis; dUMP from dCTP (dUTP route): step 1/2. Its function is as follows. Catalyzes the deamination of dCTP to dUTP. This is dCTP deaminase from Nautilia profundicola (strain ATCC BAA-1463 / DSM 18972 / AmH).